Reading from the N-terminus, the 1134-residue chain is Sterol regulatory element-binding protein 1 (1134 aa).

The transcriptional activation (acidic) stretch occupies residues 1–60 (MDELAFGEAALEQTLAEMCELDTAVLNDIEDMLQLINNQDSDFPGLFDAPYAGGETGDTG). The Cytoplasmic segment spans residues 1 to 477 (MDELAFGEAA…HSRGMLDRSR (477 aa)). The 9aaTAD motif lies at 27–35 (NDIEDMLQL). The segment at 46–73 (LFDAPYAGGETGDTGPSSPGANSPESFS) is disordered. Polar residues predominate over residues 59-69 (TGPSSPGANSP). A phosphoserine mark is found at Ser-96 and Ser-115. Disordered stretches follow at residues 130–149 (LQPA…SFPA) and 170–195 (SGTL…VLPT). The segment covering 170–179 (SGTLPGNTQQ) has biased composition (polar residues). Residues 227 to 487 (QQVPVVLQPH…LALCVLAFLC (261 aa)) form an interaction with LMNA region. The region spanning 317 to 367 (EKRTAHNAIEKRYRSSINDKIVELKDLVVGTEAKLNKSAVLRKAIDYIRFL) is the bHLH domain. A phosphoserine; by SIK1 mark is found at Ser-331 and Ser-332. Positions 367–388 (LQHSNQKLKQENLTLRSAHKSK) are leucine-zipper. A Phosphoserine; by AMPK modification is found at Ser-389. Ser-395 carries the phosphoserine; by SIK1 modification. The tract at residues 415 to 468 (VETLTPPPSDAGSPSQSSPLSFGSRASSSGGSDSEPDSPAFEDSQVKAQRLPSH) is disordered. The span at 424-453 (DAGSPSQSSPLSFGSRASSSGGSDSEPDSP) shows a compositional bias: low complexity. The residue at position 448 (Ser-448) is a Phosphoserine. A helical transmembrane segment spans residues 478 to 498 (LALCVLAFLCLTCNPLASLFG). The Lumenal portion of the chain corresponds to 499–536 (WGILTPSDATGTHRSSGRSMLEAESRDGSNWTQWLLPP). The helical transmembrane segment at 537–557 (LVWLANGLLVLACLALLFVYG) threads the bilayer. Over 558-1134 (EPVTRPHSGP…LGGGTTVTSS (577 aa)) the chain is Cytoplasmic. Ser-1047 is modified (phosphoserine).

Belongs to the SREBP family. In terms of assembly, forms a tight complex with SCAP, the SCAP-SREBP complex, in the endoplasmic reticulum membrane and the Golgi apparatus. Interacts with PAQR3; the interaction anchors the SCAP-SREBP complex to the Golgi apparatus in low cholesterol conditions. As to quaternary structure, efficient DNA binding of the soluble transcription factor fragment requires dimerization with another bHLH protein. Interacts with CEBPA, the interaction produces a transcriptional synergy. Interacts with LMNA. Processed in the Golgi apparatus, releasing the protein from the membrane. At low cholesterol the SCAP-SREBP complex is recruited into COPII vesicles for export from the endoplasmic reticulum. In the Golgi, complex SREBPs are cleaved sequentially by site-1 (MBTPS1, S1P) and site-2 (MBTPS2, S2P) proteases. The first cleavage by site-1 protease occurs within the luminal loop, the second cleavage by site-2 protease occurs within the first transmembrane domain, releasing the transcription factor from the Golgi membrane. Post-translationally, phosphorylated by AMPK, leading to suppress protein processing and nuclear translocation, and repress target gene expression. Phosphorylation at Ser-389 by SIK1 represses activity possibly by inhibiting DNA-binding. In terms of processing, SCAP-free SREBF1 is ubiquitinated by the BCR(ARMC5) complex, leading to its degradation. Ubiquitinated; the nuclear form has a rapid turnover and is rapidly ubiquitinated and degraded by the proteasome in the nucleus. In terms of tissue distribution, predominant isoform expressed in most tissues. Predominates in liver, adrenal gland, brain and adipose tissue. Also found in kidney, thymus, testis, muscle, jejunum, and ileum. As to expression, expressed only in select tissues, such as intestinal epithelial, heart, macrophage and bone marrow dendritic cells. Also found in kidney, thymus, testis, muscle, jejunum, and ileum.

The protein localises to the endoplasmic reticulum membrane. It localises to the golgi apparatus membrane. It is found in the cytoplasmic vesicle. The protein resides in the COPII-coated vesicle membrane. Its subcellular location is the nucleus. Its activity is regulated as follows. Activation by cleavage is down-regulated upon activation of SIRT3-dependent PRKAA1/AMPK-alpha signaling cascade which leads to inhibition of ATP-consuming lipogenesis to restore cellular energy balance. Precursor of the transcription factor form (Processed sterol regulatory element-binding protein 1), which is embedded in the endoplasmic reticulum membrane. Low sterol concentrations promote processing of this form, releasing the transcription factor form that translocates into the nucleus and activates transcription of genes involved in cholesterol biosynthesis and lipid homeostasis. Functionally, key transcription factor that regulates expression of genes involved in cholesterol biosynthesis and lipid homeostasis. Binds to the sterol regulatory element 1 (SRE-1) (5'-ATCACCCCAC-3'). Has dual sequence specificity binding to both an E-box motif (5'-ATCACGTGA-3') and to SRE-1 (5'-ATCACCCCAC-3'). Regulates the promoters of genes involved in cholesterol biosynthesis and the LDL receptor (LDLR) pathway of sterol regulation. Its function is as follows. Isoform expressed only in select tissues, which has higher transcriptional activity compared to SREBP-1C. Able to stimulate both lipogenic and cholesterogenic gene expression. Has a role in the nutritional regulation of fatty acids and triglycerides in lipogenic organs such as the liver. Required for innate immune response in macrophages by regulating lipid metabolism. In terms of biological role, predominant isoform expressed in most tissues, which has weaker transcriptional activity compared to isoform SREBP-1A. Primarily controls expression of lipogenic gene. Strongly activates global lipid synthesis in rapidly growing cells. The sequence is that of Sterol regulatory element-binding protein 1 from Mus musculus (Mouse).